We begin with the raw amino-acid sequence, 369 residues long: MAVSVTPIRDTKWLTLEVCREFQRGTCSRPDTECKFAHPSKSCQVENGRVIACFDSLKGRCSRENCKYLHPPPHLKTQLEINGRNNLIQQKNMAMLAQQMQLANAMMPGAPLQPVPMFSVAPSLATNASAAFNPYLGPVSPGLVPAEILPTAPMLVAGNPGVPVPAAAAAAAQKLMRTDRLEVCREYQRGNCNRGENDCRFAHPADSAMIDTNDNTVTVCMDYIKGRCSREKCKYFHPPAHLQAKIKAAQYQVNQAAAAQAAATAAAMGIPQAVLPPLPKRPALEKTNGATAVFNTGIFQYQQALANMQLQQHTAFLPPVPMVHGATPATVSAATTSATSVPFAATATANQIPIISAEHLTSHKYVTQM.

C3H1-type zinc fingers lie at residues 13 to 41 (WLTLEVCREFQRGTCSRPDTECKFAHPSK), 47 to 73 (NGRVIACFDSLKGRCSRENCKYLHPPP), 178 to 206 (TDRLEVCREYQRGNCNRGENDCRFAHPAD), and 214 to 240 (DNTVTVCMDYIKGRCSREKCKYFHPPA).

It belongs to the muscleblind family.

Its subcellular location is the nucleus. The protein resides in the cytoplasm. The protein localises to the cytoplasmic granule. Its function is as follows. Involved in pre-mRNA alternative splicing regulation. Binds to CUG triplet repeat in RNA. This chain is Muscleblind-like protein 1 (MBNL1), found in Gallus gallus (Chicken).